Consider the following 191-residue polypeptide: Thiol:disulfide interchange protein TxlA (191 aa).

A helical membrane pass occupies residues 14–30 (ILVIAAALVLTILVVLG). The 122-residue stretch at 27 to 148 (VVLGSRQPSA…LAANLDALVE (122 aa)) folds into the Thioredoxin domain. An intrachain disulfide couples cysteine 69 to cysteine 72. Polar residues predominate over residues 165 to 185 (SADLQPSRSSQTDPRSHSGQV). The tract at residues 165–191 (SADLQPSRSSQTDPRSHSGQVQDGVLD) is disordered.

The protein belongs to the thioredoxin family.

The protein localises to the cell membrane. In terms of biological role, required for disulfide bond formation in some proteins. Acts by transferring its disulfide bond to other proteins and is reduced in the process. This Synechococcus elongatus (strain ATCC 33912 / PCC 7942 / FACHB-805) (Anacystis nidulans R2) protein is Thiol:disulfide interchange protein TxlA (txlA).